Consider the following 30-residue polypeptide: Alanine carboxypeptidase (30 aa).

It catalyses the reaction Release of a C-terminal alanine from a peptide or a variety of pteroyl or acyl groups.. This is Alanine carboxypeptidase from Geobacillus stearothermophilus (Bacillus stearothermophilus).